Here is a 290-residue protein sequence, read N- to C-terminus: N-acetylneuraminate lyase (290 aa).

The aceneuramate site is built by S44 and T45. The active-site Proton donor is the Y133. K161 serves as the catalytic Schiff-base intermediate with substrate. 5 residues coordinate aceneuramate: T163, G185, D187, E188, and S204.

This sequence belongs to the DapA family. NanA subfamily. In terms of assembly, homotetramer.

The protein resides in the cytoplasm. It catalyses the reaction aceneuramate = aldehydo-N-acetyl-D-mannosamine + pyruvate. It functions in the pathway amino-sugar metabolism; N-acetylneuraminate degradation; D-fructose 6-phosphate from N-acetylneuraminate: step 1/5. Functionally, catalyzes the reversible aldol cleavage of N-acetylneuraminic acid (sialic acid; Neu5Ac) to form pyruvate and N-acetylmannosamine (ManNAc) via a Schiff base intermediate. The sequence is that of N-acetylneuraminate lyase from Fusobacterium nucleatum subsp. nucleatum (strain ATCC 25586 / DSM 15643 / BCRC 10681 / CIP 101130 / JCM 8532 / KCTC 2640 / LMG 13131 / VPI 4355).